The following is a 338-amino-acid chain: Anthranilate phosphoribosyltransferase (338 aa).

Residues G83, 86–87 (GD), S91, 93–96 (NCST), 111–119 (KHGNRAVSS), and A123 each bind 5-phospho-alpha-D-ribose 1-diphosphate. Position 83 (G83) interacts with anthranilate. Mg(2+) is bound at residue S95. Residue N114 coordinates anthranilate. R169 is an anthranilate binding site. The Mg(2+) site is built by D228 and E229.

It belongs to the anthranilate phosphoribosyltransferase family. In terms of assembly, homodimer. It depends on Mg(2+) as a cofactor.

It catalyses the reaction N-(5-phospho-beta-D-ribosyl)anthranilate + diphosphate = 5-phospho-alpha-D-ribose 1-diphosphate + anthranilate. Its pathway is amino-acid biosynthesis; L-tryptophan biosynthesis; L-tryptophan from chorismate: step 2/5. Its function is as follows. Catalyzes the transfer of the phosphoribosyl group of 5-phosphorylribose-1-pyrophosphate (PRPP) to anthranilate to yield N-(5'-phosphoribosyl)-anthranilate (PRA). The sequence is that of Anthranilate phosphoribosyltransferase from Nitratidesulfovibrio vulgaris (strain DSM 19637 / Miyazaki F) (Desulfovibrio vulgaris).